A 244-amino-acid chain; its full sequence is Uridylate kinase (244 aa).

12-15 (KLSG) contributes to the ATP binding site. Residues 20 to 25 (GERGVG) form an involved in allosteric activation by GTP region. G54 provides a ligand contact to UMP. Residues G55 and R59 each coordinate ATP. UMP-binding positions include D74 and 135-142 (IGSPYFST). ATP is bound by residues N163, Y169, and D172.

It belongs to the UMP kinase family. As to quaternary structure, homohexamer.

It localises to the cytoplasm. It catalyses the reaction UMP + ATP = UDP + ADP. It functions in the pathway pyrimidine metabolism; CTP biosynthesis via de novo pathway; UDP from UMP (UMPK route): step 1/1. Allosterically activated by GTP. Inhibited by UTP. Functionally, catalyzes the reversible phosphorylation of UMP to UDP. The protein is Uridylate kinase of Streptococcus suis (strain 98HAH33).